Reading from the N-terminus, the 375-residue chain is Dual-specificity RNA methyltransferase RlmN (375 aa).

The active-site Proton acceptor is the Glu93. One can recognise a Radical SAM core domain in the interval 99–346 (ETNRGTLCVS…TTTRKTRGDD (248 aa)). The cysteines at positions 106 and 351 are disulfide-linked. Cys113, Cys117, and Cys120 together coordinate [4Fe-4S] cluster. Residues 177 to 178 (GE), Ser209, 231 to 233 (SLH), and Asn308 each bind S-adenosyl-L-methionine. Cys351 acts as the S-methylcysteine intermediate in catalysis.

This sequence belongs to the radical SAM superfamily. RlmN family. [4Fe-4S] cluster serves as cofactor.

Its subcellular location is the cytoplasm. It catalyses the reaction adenosine(2503) in 23S rRNA + 2 reduced [2Fe-2S]-[ferredoxin] + 2 S-adenosyl-L-methionine = 2-methyladenosine(2503) in 23S rRNA + 5'-deoxyadenosine + L-methionine + 2 oxidized [2Fe-2S]-[ferredoxin] + S-adenosyl-L-homocysteine. The enzyme catalyses adenosine(37) in tRNA + 2 reduced [2Fe-2S]-[ferredoxin] + 2 S-adenosyl-L-methionine = 2-methyladenosine(37) in tRNA + 5'-deoxyadenosine + L-methionine + 2 oxidized [2Fe-2S]-[ferredoxin] + S-adenosyl-L-homocysteine. Its function is as follows. Specifically methylates position 2 of adenine 2503 in 23S rRNA and position 2 of adenine 37 in tRNAs. m2A2503 modification seems to play a crucial role in the proofreading step occurring at the peptidyl transferase center and thus would serve to optimize ribosomal fidelity. The protein is Dual-specificity RNA methyltransferase RlmN of Azoarcus sp. (strain BH72).